Consider the following 970-residue polypeptide: uncharacterized protein (970 aa).

Residues 11 to 31 (WILKIGTILGLVCLGLFGVIF) form a helical membrane-spanning segment. Positions 366–387 (ASNSNDNNNQNNNNNNNSSDVI) are disordered. The segment covering 367–387 (SNSNDNNNQNNNNNNNSSDVI) has biased composition (low complexity). Helical transmembrane passes span 515–535 (FASSFIAFGIIVLIAAVLLTL), 537–557 (YKLLGLYKALALGLSVVSSLV), 558–578 (IFSAVGGVVDVFSFVGIFFVI), 614–634 (FFANLEFHITWLISALVVIYL), 645–665 (LMAISAITSYFFSYGISIVLI), 726–746 (FLFVWLILLAIGVVMLVLYLV), 762–782 (SNGIIAGIGIVSLLYLAYCLI), 789–809 (CLSYLVSFILLCSGLFAVMYL), 816–836 (IDQSTIQLITFVYLFWLFFAA), 877–897 (IESSSLVFIFIIYSGFNFGGI), and 903–923 (LVIFYLIAIVGLFDVATAFLP).

Its subcellular location is the cell membrane. This is an uncharacterized protein from Mycoplasma genitalium (strain ATCC 33530 / DSM 19775 / NCTC 10195 / G37) (Mycoplasmoides genitalium).